A 282-amino-acid polypeptide reads, in one-letter code: 4-diphosphocytidyl-2-C-methyl-D-erythritol kinase (282 aa).

Lys9 is an active-site residue. Pro98 to Ser108 contributes to the ATP binding site. The active site involves Asp140.

This sequence belongs to the GHMP kinase family. IspE subfamily. As to quaternary structure, homodimer.

It carries out the reaction 4-CDP-2-C-methyl-D-erythritol + ATP = 4-CDP-2-C-methyl-D-erythritol 2-phosphate + ADP + H(+). The protein operates within isoprenoid biosynthesis; isopentenyl diphosphate biosynthesis via DXP pathway; isopentenyl diphosphate from 1-deoxy-D-xylulose 5-phosphate: step 3/6. Functionally, catalyzes the phosphorylation of the position 2 hydroxy group of 4-diphosphocytidyl-2C-methyl-D-erythritol. In Klebsiella pneumoniae (strain 342), this protein is 4-diphosphocytidyl-2-C-methyl-D-erythritol kinase.